Consider the following 327-residue polypeptide: L-lactate dehydrogenase (327 aa).

Residues Val-18, Asp-39, Arg-44, Tyr-69, and 83–84 (GL) contribute to the NAD(+) site. Residues Gln-86, Arg-92, and 124-127 (NPVD) each bind substrate. NAD(+)-binding positions include 122–124 (AAN) and Ser-147. 152-155 (DSAR) contributes to the substrate binding site. Beta-D-fructose 1,6-bisphosphate-binding residues include Arg-157 and His-172. His-179 (proton acceptor) is an active-site residue. Tyr-224 is modified (phosphotyrosine). Thr-233 is a binding site for substrate.

This sequence belongs to the LDH/MDH superfamily. LDH family. In terms of assembly, homotetramer.

Its subcellular location is the cytoplasm. It catalyses the reaction (S)-lactate + NAD(+) = pyruvate + NADH + H(+). It functions in the pathway fermentation; pyruvate fermentation to lactate; (S)-lactate from pyruvate: step 1/1. Its activity is regulated as follows. Allosterically activated by fructose 1,6-bisphosphate (FBP). Its function is as follows. Catalyzes the conversion of lactate to pyruvate. The protein is L-lactate dehydrogenase of Streptococcus suis (strain 98HAH33).